The primary structure comprises 446 residues: Peroxisomal biogenesis factor 3 (446 aa).

Residues Met-1 to Lys-12 lie on the Peroxisomal side of the membrane. The chain crosses the membrane as a helical span at residues Leu-13–Ala-33. Over Ala-34–Val-446 the chain is Cytoplasmic. A disordered region spans residues Arg-101–Ser-122.

It belongs to the peroxin-3 family.

Its subcellular location is the peroxisome membrane. Involved in peroxisome biosynthesis. The protein is Peroxisomal biogenesis factor 3 (PEX3) of Eremothecium gossypii (strain ATCC 10895 / CBS 109.51 / FGSC 9923 / NRRL Y-1056) (Yeast).